Reading from the N-terminus, the 212-residue chain is Orotate phosphoribosyltransferase (212 aa).

Residues Arg97, Lys101, His103, and 123–131 (EDLISTGGS) contribute to the 5-phospho-alpha-D-ribose 1-diphosphate site. Ser127 lines the orotate pocket.

Belongs to the purine/pyrimidine phosphoribosyltransferase family. PyrE subfamily. In terms of assembly, homodimer. Mg(2+) is required as a cofactor.

It carries out the reaction orotidine 5'-phosphate + diphosphate = orotate + 5-phospho-alpha-D-ribose 1-diphosphate. Its pathway is pyrimidine metabolism; UMP biosynthesis via de novo pathway; UMP from orotate: step 1/2. Functionally, catalyzes the transfer of a ribosyl phosphate group from 5-phosphoribose 1-diphosphate to orotate, leading to the formation of orotidine monophosphate (OMP). In Phocaeicola vulgatus (strain ATCC 8482 / DSM 1447 / JCM 5826 / CCUG 4940 / NBRC 14291 / NCTC 11154) (Bacteroides vulgatus), this protein is Orotate phosphoribosyltransferase.